Consider the following 305-residue polypeptide: Ribosomal RNA small subunit methyltransferase H (305 aa).

S-adenosyl-L-methionine is bound by residues 33-35 (GGY), aspartate 51, phenylalanine 78, aspartate 96, and glutamine 103.

This sequence belongs to the methyltransferase superfamily. RsmH family.

It localises to the cytoplasm. The catalysed reaction is cytidine(1402) in 16S rRNA + S-adenosyl-L-methionine = N(4)-methylcytidine(1402) in 16S rRNA + S-adenosyl-L-homocysteine + H(+). Functionally, specifically methylates the N4 position of cytidine in position 1402 (C1402) of 16S rRNA. In Rickettsia bellii (strain RML369-C), this protein is Ribosomal RNA small subunit methyltransferase H.